Reading from the N-terminus, the 301-residue chain is Homoserine O-acetyltransferase (301 aa).

Cys142 acts as the Acyl-thioester intermediate in catalysis. 2 residues coordinate substrate: Lys163 and Ser192. Catalysis depends on His235, which acts as the Proton acceptor. The active site involves Glu237. Arg249 is a binding site for substrate.

Belongs to the MetA family. Homodimer.

The protein localises to the cytoplasm. The enzyme catalyses L-homoserine + acetyl-CoA = O-acetyl-L-homoserine + CoA. Its pathway is amino-acid biosynthesis; L-methionine biosynthesis via de novo pathway; O-acetyl-L-homoserine from L-homoserine: step 1/1. Transfers an acetyl group from acetyl-CoA to L-homoserine, forming acetyl-L-homoserine. Utilizes a ping-pong kinetic mechanism in which the acetyl group of acetyl-CoA is initially transferred to the enzyme to form an acetyl-enzyme intermediate before subsequent transfer to homoserine to form the final product, O-acetylhomoserine. Cannot use succinyl-CoA as the acyl donor. This chain is Homoserine O-acetyltransferase, found in Bacillus cereus (strain ATCC 10987 / NRS 248).